The sequence spans 137 residues: Protein yippee-like F37A8.5 (137 aa).

Residues 1-20 (MHFRMKVLENSSKHNTPKKQ) are disordered. Residues 32–129 (RCYSCIHCRA…IELAHMVKDN (98 aa)) form the Yippee domain. The Zn(2+) site is built by Cys-36, Cys-39, Cys-92, and Cys-95.

Belongs to the yippee family.

This Caenorhabditis elegans protein is Protein yippee-like F37A8.5.